The following is a 72-amino-acid chain: Translation initiation factor IF-1 (72 aa).

The S1-like domain occupies 1–72; it reads MAKDDVIQMQ…SRARIVFRTK (72 aa).

Belongs to the IF-1 family. As to quaternary structure, component of the 30S ribosomal translation pre-initiation complex which assembles on the 30S ribosome in the order IF-2 and IF-3, IF-1 and N-formylmethionyl-tRNA(fMet); mRNA recruitment can occur at any time during PIC assembly.

It localises to the cytoplasm. In terms of biological role, one of the essential components for the initiation of protein synthesis. Stabilizes the binding of IF-2 and IF-3 on the 30S subunit to which N-formylmethionyl-tRNA(fMet) subsequently binds. Helps modulate mRNA selection, yielding the 30S pre-initiation complex (PIC). Upon addition of the 50S ribosomal subunit IF-1, IF-2 and IF-3 are released leaving the mature 70S translation initiation complex. This chain is Translation initiation factor IF-1, found in Herminiimonas arsenicoxydans.